We begin with the raw amino-acid sequence, 505 residues long: Circadian clock protein KaiC3 (505 aa).

KaiC domains lie at E10–D252 and I253–T485. S423 carries the post-translational modification Phosphoserine; by autocatalysis. The residue at position 424 (T424) is a Phosphothreonine; by autocatalysis.

Belongs to the KaiC family. Multimerizes, probably forming homohexamers, no interaction with KaiC1 or KaiC2 is seen. In another study forms hexamers, interacts with KaiB1, KaiB3, and KaiC1. In terms of processing, autophosphorylates and dephosphorylates. Dephosphorylation of KaiC3 was higher at 25 than at 30 or 35 degrees Celsius.

It carries out the reaction L-seryl-[protein] + ATP = O-phospho-L-seryl-[protein] + ADP + H(+). The enzyme catalyses L-threonyl-[protein] + ATP = O-phospho-L-threonyl-[protein] + ADP + H(+). It catalyses the reaction ATP + H2O = ADP + phosphate + H(+). ATPase activity is influenced by KaiB1 and KaiB3 in vitro; ATPase is reduced 35% by the KaiB1 tetramer and 55% by the KaiB3 monomer but not affected by KaiA or the KaiB3 tetramer. Its function is as follows. Seems to be linked to dark adaption of Synechocystis cells, but is not as essential as the core oscillator KaiAB1C1 for the circadian cycle. KaiB3 and KaiC3 may cross talk with the core oscillator. Autophosphorylates and dephosphorylates independently of KaiA. Has a weak ATPase, hydrolyzes 8.5 ATP/monomer/day, has no detectable ATP synthesis activity. ATPase activity reduced 55% by KaiB3 monomer but not the KaiB3 tetramer or KaiA in vitro, reduced 35% by KaiB1 tetramer. The polypeptide is Circadian clock protein KaiC3 (Synechocystis sp. (strain ATCC 27184 / PCC 6803 / Kazusa)).